Here is a 378-residue protein sequence, read N- to C-terminus: MQLPSFLEVYKGLISTDSISSTDPSWDHGNEKVIEKMAQWFKDVGFSVEVVEVEPGKHNMVAKMGSGEGGLLLAGHSDTVPFDEGRWNFDPHALTEHNNRFYGLGTADMKGFFAFVYEAAKKMDWSKQTKPLYVLATCDEETTMLGARHFTENAPFKPDYCIIGEPTSLVPIRGHKGHVANAVRVTGKSGHSSDPALGVNAIEIMHEVLFALMQLRDKLVKEYHHPGFAIPSPTLNLGHIHGGDSANRICGCCELHYDVRPLPGISLDGLDNMLRSALKEVEAKWPGRIEITPLHEPIPGYECQHDHPFIGGMESVCETESQTVNYCTEAPFLQELCPTLVLGPGSIDQAHQPDEFLSFDFIDPTIDVLSKSIRKYCF.

Histidine 76 provides a ligand contact to Zn(2+). The active site involves aspartate 78. Zn(2+) is bound at residue aspartate 108. The active site involves glutamate 140. Residues glutamate 141, glutamate 165, and histidine 351 each coordinate Zn(2+).

This sequence belongs to the peptidase M20A family. ArgE subfamily. As to quaternary structure, homodimer. It depends on Zn(2+) as a cofactor. Requires Co(2+) as cofactor. The cofactor is glutathione.

It localises to the cytoplasm. The catalysed reaction is N(2)-acetyl-L-ornithine + H2O = L-ornithine + acetate. The protein operates within amino-acid biosynthesis; L-arginine biosynthesis; L-ornithine from N(2)-acetyl-L-ornithine (linear): step 1/1. Functionally, catalyzes the hydrolysis of the amide bond of N(2)-acetylated L-amino acids. Cleaves the acetyl group from N-acetyl-L-ornithine to form L-ornithine, an intermediate in L-arginine biosynthesis pathway, and a branchpoint in the synthesis of polyamines. The chain is Acetylornithine deacetylase from Vibrio atlanticus (strain LGP32) (Vibrio splendidus (strain Mel32)).